A 413-amino-acid polypeptide reads, in one-letter code: Divalent metal cation transporter MntH (413 aa).

The next 11 membrane-spanning stretches (helical) occupy residues 19–39 (LALM…GNFA), 46–66 (ASFG…AMLI), 94–114 (VWFY…AEFI), 122–142 (LVLG…TFLI), 156–176 (VIGG…IFSQ), 196–216 (AVFL…IYLH), 241–261 (IAMT…AAAF), 290–310 (IFGL…TLAG), 329–349 (AVTM…TRIL), 350–370 (VMSQ…LLIF), and 392–412 (VIVA…LLGV).

Belongs to the NRAMP family.

It localises to the cell inner membrane. H(+)-stimulated, divalent metal cation uptake system. This Klebsiella pneumoniae (strain 342) protein is Divalent metal cation transporter MntH.